A 257-amino-acid polypeptide reads, in one-letter code: Global transcriptional regulator CodY (257 aa).

The segment at 1 to 155 is GAF domain; the sequence is MSLLSKTREL…AATVIGMEIL (155 aa). Residues 203–222 constitute a DNA-binding region (H-T-H motif); the sequence is ASKVADRVGITRSVIVNALR.

It belongs to the CodY family.

It localises to the cytoplasm. DNA-binding global transcriptional regulator which is involved in the adaptive response to starvation and acts by directly or indirectly controlling the expression of numerous genes in response to nutrient availability. During rapid exponential growth, CodY is highly active and represses genes whose products allow adaptation to nutrient depletion. The polypeptide is Global transcriptional regulator CodY (Staphylococcus epidermidis (strain ATCC 12228 / FDA PCI 1200)).